The sequence spans 4293 residues: Polycystin-1 (4293 aa).

A signal peptide spans 1 to 23 (MPLGAPALLALALGLGLWLGALA). An LRRNT domain is found at 24–67 (GDPGRGCGPCPLPCFCGPAPDAACRVNCSGRWLQTLGPSLRIPA). Residues 24 to 3066 (GDPGRGCGPC…IFPEPSASIN (3043 aa)) lie on the Extracellular side of the membrane. N-linked (GlcNAc...) asparagine glycosylation is found at Asn50 and Asn89. LRR repeat units lie at residues 68-91 (DATA…VNLS) and 92-113 (ALVE…VFAN). Asn116 and Asn121 each carry an N-linked (GlcNAc...) asparagine glycan. Positions 125 to 178 (NPFECNCGLAWLPRWAKEHQVHVVQSEATTCRGPIPLAGQPLLSIPLLDNACGE) constitute an LRRCT domain. Positions 177 to 271 (GEEYVACLPD…PTLLQHTFPA (95 aa)) constitute a WSC domain. N-linked (GlcNAc...) asparagine glycosylation is found at Asn187 and Asn239. A PKD 1 domain is found at 272–359 (SPGATLVGPH…VQVEATPTVL (88 aa)). The N-linked (GlcNAc...) asparagine glycan is linked to Asn370. The C-type lectin domain maps to 415 to 530 (GNGHCYRLVA…CSAPHSYVCE (116 aa)). 2 disulfide bridges follow: Cys436–Cys529 and Cys507–Cys521. The tract at residues 613 to 632 (GGAAAVPEGSSEPDNRTEPA) is disordered. The N-linked (GlcNAc...) asparagine glycan is linked to Asn627. Residues 633–666 (PKCVPEELWCPGANVCIPFDASCNSHVCINGSVS) enclose the LDL-receptor class A; atypical domain. 2 cysteine pairs are disulfide-bonded: Cys635/Cys648 and Cys642/Cys660. N-linked (GlcNAc...) asparagine glycans are attached at residues Asn662, Asn740, Asn804, Asn835, Asn848, Asn859, Asn884, Asn915, Asn998, Asn1004, Asn1028, Asn1084, Asn1096, Asn1107, Asn1172, Asn1188, Asn1234, Asn1263, Asn1330, Asn1342, Asn1376, Asn1444, Asn1449, Asn1468, Asn1535, Asn1548, Asn1557, Asn1643, Asn1657, Asn1706, Asn1730, Asn1788, Asn1831, Asn1863, and Asn1876. 15 PKD domains span residues 849-922 (ATAT…RVTA), 929-1014 (LRAV…NKMH), 1017-1123 (WVSA…LPNV), 1121-1209 (PNVA…LHGL), 1207-1292 (HGLT…EVLH), 1288-1377 (LEVL…IRNI), 1376-1463 (NITL…VLVT), 1462-1545 (VTGI…VRGL), 1544-1629 (GLTI…IEGL), 1630-1718 (QVAG…VESL), 1716-1802 (ESLI…VGGL), 1804-1886 (IRTS…IVNL), 1885-1970 (NLML…VVGL), 1972-2053 (VPNC…MVEV), and 2056-2144 (IIQY…ACRE). Residues Asn1987, Asn2046, Asn2070, Asn2121, Asn2244, Asn2349, Asn2391, Asn2408, Asn2414, Asn2563, Asn2640, Asn2713, Asn2749, Asn2813, Asn2836, Asn2873, Asn2948, and Asn2986 are each glycosylated (N-linked (GlcNAc...) asparagine). One can recognise an REJ domain in the interval 2142 to 2828 (CREPEVEVAL…QLIFLVDSNP (687 aa)). The region spanning 2857–3055 (PIEQLAAERA…SLFVPPSHVQ (199 aa)) is the GAIN-B domain. A disulfide bond links Cys3007 and Cys3035. The GPS stretch occupies residues 3007-3055 (CQYFSEEMMMWRTEGIVPLEETSPSQAVCLTRHLTAFGASLFVPPSHVQ). Residues 3067–3087 (YIVLLTCVICLVTYVVMAMIL) traverse the membrane as a helical segment. Over 3088-3269 (RKLDQLDVSR…DRPPRSRFTR (182 aa)) the chain is Cytoplasmic. The PLAT domain occupies 3110–3225 (FKYEILVKTG…EANGGLVEKE (116 aa)). A helical membrane pass occupies residues 3270–3290 (VQRVTCCVLLLCLFLAANAVW). The Extracellular portion of the chain corresponds to 3291–3315 (YGVVRDTTYSMGPVSSLISPGVDTV). Residues 3316–3336 (AIGLVSSVVVYPVYLAVLFLF) traverse the membrane as a helical segment. The Cytoplasmic segment spans residues 3337–3549 (RMSRSKVSGD…LPAWCAPLAH (213 aa)). The helical transmembrane segment at 3550–3570 (GLSLLLVAVAVAVSGWIGASF) threads the bilayer. The Extracellular segment spans residues 3571–3572 (PP). Residues 3573 to 3593 (SVSVMWLLSSSSSFLASFLGW) traverse the membrane as a helical segment. Over 3594-3655 (EPLKVLLEAL…LAKEEARKVK (62 aa)) the chain is Cytoplasmic. The chain crosses the membrane as a helical span at residues 3656–3676 (RLHDMLKRLLVYMLFLLVTLL). Over 3677-3891 (ANYGDASCHG…RLSTGLSLPL (215 aa)) the chain is Extracellular. Residues Asn3728 and Asn3780 are each glycosylated (N-linked (GlcNAc...) asparagine). A helical transmembrane segment spans residues 3892–3912 (LTSVCLLLFALYFSMAEVQTW). The Cytoplasmic segment spans residues 3913-3925 (RKDGCACTARPDT). A helical transmembrane segment spans residues 3926–3946 (WARCLLVILTAATGLVRLAQL). The Extracellular portion of the chain corresponds to 3947–3974 (GIADRQWTHFVQDHPRHFTSFDQVAQLG). A helical membrane pass occupies residues 3975–3995 (SVARGLAASLLFLLLVKAAQQ). The Cytoplasmic segment spans residues 3996-4017 (LRFVRQWSVFGKTLCRALPELM). Residues 4018–4038 (GATLGLVLLGVAYAQMAILLI) form a helical membrane-spanning segment. Residues 4039–4080 (SSGADTLYNMARAFLVLCPGARVPTLCPSESWYLSPLLCVGL) are Extracellular-facing. A helical transmembrane segment spans residues 4081 to 4100 (WALRVWGALRLGAILLRWRY). The Cytoplasmic portion of the chain corresponds to 4101–4293 (HALRGELYRP…PNNKVHPSST (193 aa)). Disordered regions lie at residues 4150–4197 (PLPS…STLK) and 4235–4293 (SLQG…PSST). Residues 4153-4172 (SRSSRGSKSSPVVLPPSSGS) are compositionally biased toward low complexity. A Phosphoserine; by PRKX; in vitro modification is found at Ser4156. Residues 4173–4195 (EASHPSTSSSQPDGPSASLSRST) are compositionally biased toward polar residues. The stretch at 4210-4241 (ESLLVQFDRLNQATEDVYQLEQQLQSLQGHGH) forms a coiled coil. Residues 4238 to 4256 (GHGHNGPPSSPSPGCFPGS) show a composition bias toward low complexity. Residues 4265–4276 (SRASQGLDQTVG) show a composition bias toward polar residues.

It belongs to the polycystin family. Component of the heterotetrameric polycystin channel complex with PKD2; the tetramer contains one PKD1 chain and three PKD2 chains. Interacts with PKD2; the interaction is required for ciliary localization. Interacts with PKD2L1. Interacts with PRKX; involved in differentiation and controlled morphogenesis of the kidney. Interacts (via extracellular domain) with WNT3A, WNT4 and WNT9B. Interacts with WNT5A, DVL1 and DVL2. Interacts with NPHP1 (via SH3 domain). Interacts with BBS1, BBS4, BBS5 and TTC8. Interacts with RGS7. Interacts (via C-terminal domain) with RABEP1; the interaction connects PKD1:PKD2 to GGA1 and ARL3 that mediate the ciliary targeting. Interacts (via the PKD repeats in the N-terminal extracellular region) with EPCIP; the interaction is not dependent on N-glycosylation of either protein. Post-translationally, N-glycosylated. In terms of processing, after synthesis, undergoes autoproteolytic cleavage between Leu-3040 and Thr-3041 in the GPS region of the GAIN-B domain. Cleavage at the GPS region occurs through a cis-autoproteolytic mechanism involving an ester-intermediate via N-O acyl rearrangement. This process takes place in the early secretory pathway, depends on initial N-glycosylation, and requires the REJ domain. PKD1 is ubiquitously and incompletely cleaved in wild-type mice, so that uncleaved and cleaved PKD1 molecules coexist. The differential patterns of cleavage during embryonic development, as well as in adult mice, suggest different functions of uncleaved and cleaved molecules.

It localises to the cell membrane. The protein localises to the cell projection. Its subcellular location is the cilium. It is found in the endoplasmic reticulum. The protein resides in the golgi apparatus. It localises to the vesicle. The protein localises to the secreted. Its subcellular location is the extracellular exosome. Component of a heteromeric calcium-permeable ion channel formed by PKD1 and PKD2 that is activated by interaction between PKD1 and a Wnt family member, such as WNT3A and WNT9B. Both PKD1 and PKD2 are required for channel activity. Involved in renal tubulogenesis. Involved in fluid-flow mechanosensation by the primary cilium in renal epithelium. Acts as a regulator of cilium length, together with PKD2. The dynamic control of cilium length is essential in the regulation of mechanotransductive signaling. The cilium length response creates a negative feedback loop whereby fluid shear-mediated deflection of the primary cilium, which decreases intracellular cAMP, leads to cilium shortening and thus decreases flow-induced signaling. May be an ion-channel regulator. Involved in adhesive protein-protein and protein-carbohydrate interactions. Likely to be involved with polycystin-1-interacting protein 1 in the detection, sequestration and exocytosis of senescent mitochondria. The polypeptide is Polycystin-1 (Mus musculus (Mouse)).